The sequence spans 318 residues: Lysophospholipase D GDPD3 (318 aa).

Over 1–2 (MS) the chain is Cytoplasmic. The helical transmembrane segment at 3–23 (LLLYYALPALGSYAMLSIFFL) threads the bilayer. Residues 24–198 (RRPHLLHTPR…KAANPEMPLS (175 aa)) are Extracellular-facing. One can recognise a GP-PDE domain in the interval 39-308 (IRLGAHRGGS…DYPTALRHYL (270 aa)). Residues glutamate 71, aspartate 73, and histidine 86 each contribute to the a divalent metal cation site. The chain crosses the membrane as a helical span at residues 199-221 (FTISRGFWVLLSYYLGLLPFIPI). Residues 222 to 318 (PEKFFFCFLP…DNHGPAARTS (97 aa)) are Cytoplasmic-facing.

This sequence belongs to the glycerophosphoryl diester phosphodiesterase family. Widely expressed, with high level in kidney and ovary.

It is found in the membrane. The protein localises to the cytoplasm. The protein resides in the perinuclear region. Its subcellular location is the endoplasmic reticulum. The enzyme catalyses 1-hexadecanoyl-sn-glycero-3-phosphocholine + H2O = 1-hexadecanoyl-sn-glycero-3-phosphate + choline + H(+). It catalyses the reaction 1-hexadecanoyl-sn-glycero-3-phosphocholine + H2O = sn-glycerol 3-phosphocholine + hexadecanoate + H(+). The catalysed reaction is 1-O-(1Z-octadecenyl)-sn-glycero-3-phospho-N-hexadecanoyl-ethanolamine + H2O = 1-O-(1Z-octadecenyl)-sn-glycero-3-phosphate + N-hexadecanoylethanolamine + H(+). It carries out the reaction N-(5Z,8Z,11Z,14Z-eicosatetraenoyl)-1-(9Z-octadecenoyl)-sn-glycero-3-phosphoethanolamine + H2O = N-(5Z,8Z,11Z,14Z-eicosatetraenoyl)-ethanolamine + 1-(9Z-octadecenoyl)-sn-glycero-3-phosphate + H(+). The enzyme catalyses N,1-di-(9Z-octadecenoyl)-sn-glycero-3-phosphoethanolamine + H2O = N-(9Z-octadecenoyl) ethanolamine + 1-(9Z-octadecenoyl)-sn-glycero-3-phosphate + H(+). It catalyses the reaction N-hexadecanoyl-1-(9Z-octadecenoyl)-sn-glycero-3-phosphoethanolamine + H2O = N-hexadecanoylethanolamine + 1-(9Z-octadecenoyl)-sn-glycero-3-phosphate + H(+). The catalysed reaction is 1-O-hexadecyl-sn-glycero-3-phosphocholine + H2O = 1-O-hexadecyl-sn-glycero-3-phosphate + choline + H(+). Lysophospholipase D activity is stimulated by calcium. Loss of lysophospholipase D activity in presence of EDTA. Functionally, hydrolyzes lysoglycerophospholipids to produce lysophosphatidic acid (LPA) and the corresponding amines. Shows a preference for 1-O-alkyl-sn-glycero-3-phosphocholine (lyso-PAF), lysophosphatidylcholine (lyso-PC) and N-acylethanolamine lysophospholipids. Does not display glycerophosphodiester phosphodiesterase activity, since it cannot hydrolyze either glycerophosphoinositol or glycerophosphocholine. The polypeptide is Lysophospholipase D GDPD3 (Homo sapiens (Human)).